The sequence spans 80 residues: Mu-conotoxin BuIIIC (80 aa).

The N-terminal stretch at 1–22 is a signal peptide; sequence MMSKLGVLLTICLLLFPLFALP. Positions 23–51 are excised as a propeptide; sequence QDGDQPADRPAERMQDDLSSEQHPLFEKR. Intrachain disulfides connect Cys-56-Cys-70, Cys-57-Cys-76, and Cys-66-Cys-77. Cys-77 is modified (cysteine amide).

Belongs to the conotoxin M superfamily. As to expression, expressed by the venom duct.

It is found in the secreted. Its function is as follows. Mu-conotoxins block voltage-gated sodium channels. Extremely potent inhibitor of Nav1.4/SCN4A (96% inhibition at 1 uM). The inhibition is very slowly reversible. The sequence is that of Mu-conotoxin BuIIIC from Conus bullatus (Bubble cone).